A 218-amino-acid polypeptide reads, in one-letter code: Transaldolase (218 aa).

Lys-83 (schiff-base intermediate with substrate) is an active-site residue.

It belongs to the transaldolase family. Type 3B subfamily.

The protein resides in the cytoplasm. The enzyme catalyses D-sedoheptulose 7-phosphate + D-glyceraldehyde 3-phosphate = D-erythrose 4-phosphate + beta-D-fructose 6-phosphate. It functions in the pathway carbohydrate degradation; pentose phosphate pathway; D-glyceraldehyde 3-phosphate and beta-D-fructose 6-phosphate from D-ribose 5-phosphate and D-xylulose 5-phosphate (non-oxidative stage): step 2/3. In terms of biological role, transaldolase is important for the balance of metabolites in the pentose-phosphate pathway. Does not show fructose-6-P aldolase activity. In Thermotoga maritima (strain ATCC 43589 / DSM 3109 / JCM 10099 / NBRC 100826 / MSB8), this protein is Transaldolase (tal).